A 584-amino-acid polypeptide reads, in one-letter code: UvrABC system protein C (584 aa).

Residues 12–89 enclose the GIY-YIG domain; sequence NKPGCYLFFN…IKKYHPKYNV (78 aa). A UVR domain is found at 194–229; that stretch reads NQVKQTLVKQMQKASDNLQFEQAQRIKDQITSLDFI.

Belongs to the UvrC family. In terms of assembly, interacts with UvrB in an incision complex.

It localises to the cytoplasm. The UvrABC repair system catalyzes the recognition and processing of DNA lesions. UvrC both incises the 5' and 3' sides of the lesion. The N-terminal half is responsible for the 3' incision and the C-terminal half is responsible for the 5' incision. The chain is UvrABC system protein C from Mycoplasma mycoides subsp. mycoides SC (strain CCUG 32753 / NCTC 10114 / PG1).